The sequence spans 156 residues: Small ribosomal subunit protein uS7 (156 aa).

This sequence belongs to the universal ribosomal protein uS7 family. As to quaternary structure, part of the 30S ribosomal subunit. Contacts proteins S9 and S11.

One of the primary rRNA binding proteins, it binds directly to 16S rRNA where it nucleates assembly of the head domain of the 30S subunit. Is located at the subunit interface close to the decoding center, probably blocks exit of the E-site tRNA. The chain is Small ribosomal subunit protein uS7 from Ruminiclostridium cellulolyticum (strain ATCC 35319 / DSM 5812 / JCM 6584 / H10) (Clostridium cellulolyticum).